Here is a 440-residue protein sequence, read N- to C-terminus: Microtubule-associated tumor suppressor 1 homolog A (440 aa).

A disordered region spans residues 44–67 (KSRTNSKNPQPPTNGQPDLVPPES). Residues 69 to 401 (SRNVEYYKAQ…RLSMENEELL (333 aa)) adopt a coiled-coil conformation. Residues 407-440 (GDLNSPRKISPSPSLNLQSPRTSGMFSSPPVSPR) are disordered. Positions 417–432 (PSPSLNLQSPRTSGMF) are enriched in polar residues.

Belongs to the MTUS1 family. As to quaternary structure, homodimer.

It is found in the mitochondrion. Its subcellular location is the golgi apparatus. The protein localises to the cell membrane. It localises to the nucleus. In terms of biological role, may inhibit cell proliferation. The protein is Microtubule-associated tumor suppressor 1 homolog A (mtus1a) of Danio rerio (Zebrafish).